A 199-amino-acid polypeptide reads, in one-letter code: Elongation factor Ts (199 aa).

The segment at 81-84 (TDFV) is involved in Mg(2+) ion dislocation from EF-Tu.

It belongs to the EF-Ts family.

The protein localises to the cytoplasm. Functionally, associates with the EF-Tu.GDP complex and induces the exchange of GDP to GTP. It remains bound to the aminoacyl-tRNA.EF-Tu.GTP complex up to the GTP hydrolysis stage on the ribosome. The sequence is that of Elongation factor Ts from Thermotoga sp. (strain RQ2).